Here is a 264-residue protein sequence, read N- to C-terminus: 5'-nucleotidase SurE (264 aa).

Positions 8, 9, 41, and 98 each coordinate a divalent metal cation.

Belongs to the SurE nucleotidase family. The cofactor is a divalent metal cation.

It localises to the cytoplasm. The enzyme catalyses a ribonucleoside 5'-phosphate + H2O = a ribonucleoside + phosphate. Its function is as follows. Nucleotidase that shows phosphatase activity on nucleoside 5'-monophosphates. This Carboxydothermus hydrogenoformans (strain ATCC BAA-161 / DSM 6008 / Z-2901) protein is 5'-nucleotidase SurE.